Consider the following 377-residue polypeptide: Flagellin C (377 aa).

2 coiled-coil regions span residues 103–129 and 301–340; these read SNSK…VAET and VDSH…KDTD.

It belongs to the bacterial flagellin family. As to quaternary structure, heteromer of multiple flagellin subunits including FlaA, FlaB, FlaC, FlaD and FlaE.

The protein resides in the secreted. It is found in the bacterial flagellum. Flagellin is the subunit protein which polymerizes to form the filaments of bacterial flagella. FlaC is not essential for flagellar synthesis and motility. This is Flagellin C (flaC) from Vibrio cholerae serotype O1 (strain ATCC 39541 / Classical Ogawa 395 / O395).